Reading from the N-terminus, the 212-residue chain is Thymidylate kinase (212 aa).

ATP is bound at residue 13-20; sequence GLEGAGKS.

This sequence belongs to the thymidylate kinase family.

The catalysed reaction is dTMP + ATP = dTDP + ADP. Functionally, phosphorylation of dTMP to form dTDP in both de novo and salvage pathways of dTTP synthesis. The chain is Thymidylate kinase from Legionella pneumophila (strain Corby).